A 72-amino-acid polypeptide reads, in one-letter code: Large ribosomal subunit protein bL31 (72 aa).

Residues C16, C18, C36, and C39 each coordinate Zn(2+).

Belongs to the bacterial ribosomal protein bL31 family. Type A subfamily. In terms of assembly, part of the 50S ribosomal subunit. It depends on Zn(2+) as a cofactor.

In terms of biological role, binds the 23S rRNA. The protein is Large ribosomal subunit protein bL31 of Geobacter sp. (strain M21).